The chain runs to 182 residues: Transcription termination/antitermination protein NusG (182 aa).

In terms of domain architecture, KOW spans 131 to 163 (VGEQVRIKSGPFANQVGEVQEIEADKFKLTVLV).

The protein belongs to the NusG family.

Its function is as follows. Participates in transcription elongation, termination and antitermination. In Staphylococcus carnosus (strain TM300), this protein is Transcription termination/antitermination protein NusG.